Here is an 889-residue protein sequence, read N- to C-terminus: Extended synaptotagmin-3 (889 aa).

The disordered stretch occupies residues 1–65; it reads MAQGDPGGQT…GPRDPGQGGA (65 aa). The Cytoplasmic portion of the chain corresponds to 1–66; it reads MAQGDPGGQT…PRDPGQGGAG (66 aa). Basic and acidic residues-rich tracts occupy residues 17–28 and 41–58; these read TDKKPDEPKATE and PGGE…KGPR. 2 consecutive transmembrane segments (helical) span residues 67-91 and 92-112; these read EALA…FPVY and LCGR…LWMF. The Cytoplasmic portion of the chain corresponds to 113-889; sequence WTRNKKFKLA…ELTPTGLPTS (777 aa). Positions 155–333 constitute an SMP-LTD domain; it reads DVERVEWLNK…LPNRFTVPLS (179 aa). 2 consecutive C2 domains span residues 331–452 and 468–618; these read PLSS…DEWF and WLSL…STIK. 9 residues coordinate Ca(2+): K363, D364, D376, D423, E424, D425, D427, D429, and D430. The tract at residues 649–724 is disordered; it reads SIKRAQSQQH…GAVPESHTPS (76 aa). Over residues 658–671 the composition is skewed to basic residues; sequence HKSHGKSHQAHHQA. 2 stretches are compositionally biased toward low complexity: residues 672–682 and 691–714; these read HQTQQNHTVQQ and ISTT…PNST. In terms of domain architecture, C2 3 spans 757–879; sequence MTGEVEVSVR…DLVKGFTKWF (123 aa). Residues 804–811 form a required for phosphatidylinositol 4,5-bisphosphate-dependent location at the cell membrane region; it reads RKWSGRKK.

The protein belongs to the extended synaptotagmin family.

It is found in the cell membrane. The protein localises to the endoplasmic reticulum membrane. Functionally, tethers the endoplasmic reticulum to the cell membrane and promotes the formation of appositions between the endoplasmic reticulum and the cell membrane. Binds glycerophospholipids in a barrel-like domain and may play a role in cellular lipid transport. The polypeptide is Extended synaptotagmin-3 (esyt3) (Xenopus tropicalis (Western clawed frog)).